The following is a 729-amino-acid chain: Phosphoribosylformylglycinamidine synthase subunit PurL (729 aa).

His54 is an active-site residue. Positions 57 and 96 each coordinate ATP. Residue Glu98 coordinates Mg(2+). Substrate is bound by residues 99–102 and Arg121; that span reads SHNH. Residue His100 is the Proton acceptor of the active site. Asp122 is a binding site for Mg(2+). Residue Gln245 participates in substrate binding. Residue Asp273 coordinates Mg(2+). 317 to 319 contributes to the substrate binding site; the sequence is ETQ. Positions 495 and 532 each coordinate ATP. Asn533 lines the Mg(2+) pocket. Ser535 contacts substrate.

Belongs to the FGAMS family. As to quaternary structure, monomer. Part of the FGAM synthase complex composed of 1 PurL, 1 PurQ and 2 PurS subunits.

Its subcellular location is the cytoplasm. The catalysed reaction is N(2)-formyl-N(1)-(5-phospho-beta-D-ribosyl)glycinamide + L-glutamine + ATP + H2O = 2-formamido-N(1)-(5-O-phospho-beta-D-ribosyl)acetamidine + L-glutamate + ADP + phosphate + H(+). Its pathway is purine metabolism; IMP biosynthesis via de novo pathway; 5-amino-1-(5-phospho-D-ribosyl)imidazole from N(2)-formyl-N(1)-(5-phospho-D-ribosyl)glycinamide: step 1/2. Part of the phosphoribosylformylglycinamidine synthase complex involved in the purines biosynthetic pathway. Catalyzes the ATP-dependent conversion of formylglycinamide ribonucleotide (FGAR) and glutamine to yield formylglycinamidine ribonucleotide (FGAM) and glutamate. The FGAM synthase complex is composed of three subunits. PurQ produces an ammonia molecule by converting glutamine to glutamate. PurL transfers the ammonia molecule to FGAR to form FGAM in an ATP-dependent manner. PurS interacts with PurQ and PurL and is thought to assist in the transfer of the ammonia molecule from PurQ to PurL. The polypeptide is Phosphoribosylformylglycinamidine synthase subunit PurL (Staphylococcus epidermidis (strain ATCC 12228 / FDA PCI 1200)).